The chain runs to 686 residues: DNA ligase 2 (686 aa).

NAD(+)-binding positions include 37-41, 86-87, and Glu-121; these read DDEYD and SL. The active-site N6-AMP-lysine intermediate is the Lys-123. 4 residues coordinate NAD(+): Arg-144, Glu-179, Lys-295, and Lys-319. Cys-413, Cys-416, Cys-431, and Cys-436 together coordinate Zn(2+). The 89-residue stretch at 593 to 681 folds into the BRCT domain; the sequence is VRGEQLAGLN…GVQLPGVQAS (89 aa).

Belongs to the NAD-dependent DNA ligase family. LigA subfamily. Mg(2+) serves as cofactor. The cofactor is Mn(2+).

It carries out the reaction NAD(+) + (deoxyribonucleotide)n-3'-hydroxyl + 5'-phospho-(deoxyribonucleotide)m = (deoxyribonucleotide)n+m + AMP + beta-nicotinamide D-nucleotide.. Functionally, DNA ligase that catalyzes the formation of phosphodiester linkages between 5'-phosphoryl and 3'-hydroxyl groups in double-stranded DNA using NAD as a coenzyme and as the energy source for the reaction. It is essential for DNA replication and repair of damaged DNA. The sequence is that of DNA ligase 2 from Deinococcus deserti (strain DSM 17065 / CIP 109153 / LMG 22923 / VCD115).